Consider the following 1598-residue polypeptide: MESQQLHQNPHSLHGSAYASVTSKEVPSNQDPLAVSASNLPEFDRDSTKVNSQEETTPGTSAVPENHHHVSPQPASVPPPQNGQYQQHGMMTPNKAMASNWAHYQQPSMMTCSHYQTSPAYYQPDPHYPLPQYIPPLSTSSPDPIDSQDQHSEVPQAKTKVRNNVLPPHTLTSEENFSTWVKFYIRFLKNSNLGDIIPNDQGEIKRQMTYEEHAYIYNTFQAFAPFHLLPTWVKQILEINYSDILTVLCKSVSKMQTNNQELKDWIALANLEYNGSTSADTFEITVSTIIQRLKENNINVSDRLACQLILKGLSGDFKYLRNQYRTKTNMKLSQLFAEIQLIYDENKIMNLNKPSQYKQHSEYKNVSRTSPNTTNTKVTTRNYHRTNSSKPRAAKAHNIATSSKFSRVNNDHINESTVSSQYLSDDNELSLGQQQKESKPTRTIDSNDELPDHLLIDSGASQTLVRSAHYLHHATPNSEINIVDAQKQDIPINAIGNLHFNFQNGTKTSIKALHTPNIAYDLLSLSELANQNITACFTRNTLERSDGTVLAPIVKHGDFYWLSKKYLIPSHISKLTINNVNKSKSVNKYPYPLIHRMLGHANFRSIQKSLKKNAVTYLKESDIEWSNASTYQCPDCLIGKSTKHRHVKGSRLKYQESYEPFQYLHTDIFGPVHHLPKSAPSYFISFTDEKTRFQWVYPLHDRREESILNVFTSILAFIKNQFNARVLVIQMDRGSEYTNKTLHKFFTNRGITACYTTTADSRAHGVAERLNRTLLNDCRTLLHCSGLPNHLWFSAVEFSTIIRNSLVSPKNDKSARQHAGLAGLDITTILPFGQPVIVNNHNPDSKIHPRGIPGYALHPSRNSYGYIIYLPSLKKTVDTTNYVILQNKQTKLDQFDYDTLTFDDDLNRLTAHNQSFIEQNETEQSYDQNKESDHDYQSEIEINSDPLVNDFSSQSINPLQLDKEPVQKVRAPKEVDADISEYNILPSTIRSRTPHIINKESTEMGGTVESDTTSPRHSSTFTARNQNRPGSTNEMIDLTSQDRVNYGLENIKTTRLGGTEEPYIQRNSDTNIKYRTTNSTPSIDDRSSNSESTTPIISIETKAVCDNTPSIDTDPPEYRSSDHATPNIMPDKSSKNVTADSILDDLPLPDLTHKSPTDTSDVSKDIPHIHSRQTNSSLGGMDDSNVLTTTKSKKRSLEDNETEIEVSRDTWNNKNMRSLEPPRSKKRINLIAAIKGVKSIKPVRTTLRYDEAITYNKDNKEKDRYVEAYHKEISQLLKMNTWDTNKYYDRNDIDPKKVINSMFIFNKKRDGTHKARFVARSDIQHPDTYDSDMQSNTVHHYALMTSLSIALDNDYYITQLDISSAYLYADIKEELYIRPPPHLGLNDKLLRLRKSLYGLKQSGANWYETIKSYLINCCDMQEVRGWSCVFKNSQVTICLFVDDMILFSKDLNANKKIITTLKKQYDTKIINLGEGDNEIQYDILGLEIKYQRSKYMKLGMEKSLTEKLPKLNVPLNPKGKKLRAPGQPGHYIDQDELEINEEKFRNRFFGTKAMRLRDEVSGNNLYVYYIETKKNIADVMTKPLPIKTFKLLTNKWIH.

Composition is skewed to polar residues over residues 1–11, 19–39, and 49–60; these read MESQQLHQNPH, ASVTSKEVPSNQDPLAVSASN, and KVNSQEETTPGT. Disordered stretches follow at residues 1 to 88 and 359 to 449; these read MESQ…YQQH and QHSE…SNDE. The segment at 295–397 is RNA-binding; it reads ENNINVSDRL…SSKPRAAKAH (103 aa). The segment covering 369 to 381 has biased composition (low complexity); sequence TSPNTTNTKVTTR. Polar residues-rich tracts occupy residues 399–408 and 415–435; these read IATSSKFSRV and ESTVSSQYLSDDNELSLGQQQ. Residue D457 is the For protease activity; shared with dimeric partner of the active site. The tract at residues 579–636 is integrase-type zinc finger-like; that stretch reads NVNKSKSVNKYPYPLIHRMLGHANFRSIQKSLKKNAVTYLKESDIEWSNASTYQCPDC. In terms of domain architecture, Integrase catalytic spans 656 to 831; the sequence is ESYEPFQYLH…AGLDITTILP (176 aa). Positions 667 and 732 each coordinate Mg(2+). Composition is skewed to polar residues over residues 915–927, 1009–1034, and 1065–1082; these read SFIEQNETEQSYD, ESDTTSPRHSSTFTARNQNRPGSTNE, and QRNSDTNIKYRTTNSTPS. Disordered stretches follow at residues 915 to 934, 1004 to 1034, 1059 to 1135, 1146 to 1165, and 1170 to 1205; these read SFIEQNETEQSYDQNKESDH, MGGTVESDTTSPRHSSTFTARNQNRPGSTNE, TEEP…KSSK, LPLPDLTHKSPTDTSDVSKD, and HSRQTNSSLGGMDDSNVLTTTKSKKRSLEDNETEIE. Over residues 1151–1165 the composition is skewed to basic and acidic residues; the sequence is LTHKSPTDTSDVSKD. Residues 1193-1227 carry the Bipartite nuclear localization signal motif; sequence KKRSLEDNETEIEVSRDTWNNKNMRSLEPPRSKKR. The Reverse transcriptase Ty1/copia-type domain maps to 1353–1491; sequence NDYYITQLDI…DILGLEIKYQ (139 aa). Residues D1361, D1442, and D1443 each contribute to the Mg(2+) site.

In terms of assembly, the capsid protein forms a homotrimer, from which the VLPs are assembled. The protease is a homodimer, whose active site consists of two apposed aspartic acid residues. Initially, virus-like particles (VLPs) are composed of the structural unprocessed proteins Gag and Gag-Pol, and also contain the host initiator methionine tRNA (tRNA(i)-Met) which serves as a primer for minus-strand DNA synthesis, and a dimer of genomic Ty RNA. Processing of the polyproteins occurs within the particle and proceeds by an ordered pathway, called maturation. First, the protease (PR) is released by autocatalytic cleavage of the Gag-Pol polyprotein, and this cleavage is a prerequisite for subsequent processing at the remaining sites to release the mature structural and catalytic proteins. Maturation takes place prior to the RT reaction and is required to produce transposition-competent VLPs.

The protein resides in the cytoplasm. It is found in the nucleus. It catalyses the reaction DNA(n) + a 2'-deoxyribonucleoside 5'-triphosphate = DNA(n+1) + diphosphate. The catalysed reaction is Endonucleolytic cleavage to 5'-phosphomonoester.. In terms of biological role, capsid protein (CA) is the structural component of the virus-like particle (VLP), forming the shell that encapsulates the retrotransposons dimeric RNA genome. The particles are assembled from trimer-clustered units and there are holes in the capsid shells that allow for the diffusion of macromolecules. CA also has nucleocapsid-like chaperone activity, promoting primer tRNA(i)-Met annealing to the multipartite primer-binding site (PBS), dimerization of Ty2 RNA and initiation of reverse transcription. Its function is as follows. The aspartyl protease (PR) mediates the proteolytic cleavages of the Gag and Gag-Pol polyproteins after assembly of the VLP. Reverse transcriptase/ribonuclease H (RT) is a multifunctional enzyme that catalyzes the conversion of the retro-elements RNA genome into dsDNA within the VLP. The enzyme displays a DNA polymerase activity that can copy either DNA or RNA templates, and a ribonuclease H (RNase H) activity that cleaves the RNA strand of RNA-DNA heteroduplexes during plus-strand synthesis and hydrolyzes RNA primers. The conversion leads to a linear dsDNA copy of the retrotransposon that includes long terminal repeats (LTRs) at both ends. Functionally, integrase (IN) targets the VLP to the nucleus, where a subparticle preintegration complex (PIC) containing at least integrase and the newly synthesized dsDNA copy of the retrotransposon must transit the nuclear membrane. Once in the nucleus, integrase performs the integration of the dsDNA into the host genome. This chain is Transposon Ty2-LR2 Gag-Pol polyprotein (TY2B-LR2), found in Saccharomyces cerevisiae (strain ATCC 204508 / S288c) (Baker's yeast).